A 246-amino-acid polypeptide reads, in one-letter code: Flagellar brake protein YcgR (246 aa).

Positions 122-234 (QRREFFRIQT…PMETIIQRYV (113 aa)) constitute a PilZ domain.

Belongs to the YcgR family. Monomer. Interacts with the flagellar basal bodies.

It localises to the bacterial flagellum basal body. Functionally, acts as a flagellar brake, regulating swimming and swarming in a bis-(3'-5') cyclic diguanylic acid (c-di-GMP)-dependent manner. Binds 1 c-di-GMP dimer per subunit. Increasing levels of c-di-GMP lead to decreased motility. The chain is Flagellar brake protein YcgR from Chromobacterium violaceum (strain ATCC 12472 / DSM 30191 / JCM 1249 / CCUG 213 / NBRC 12614 / NCIMB 9131 / NCTC 9757 / MK).